The primary structure comprises 314 residues: tRNA dimethylallyltransferase 2 (314 aa).

8–15 is an ATP binding site; that stretch reads GPTGSGKS. 10-15 contributes to the substrate binding site; that stretch reads TGSGKS.

This sequence belongs to the IPP transferase family. As to quaternary structure, monomer. It depends on Mg(2+) as a cofactor.

It carries out the reaction adenosine(37) in tRNA + dimethylallyl diphosphate = N(6)-dimethylallyladenosine(37) in tRNA + diphosphate. In terms of biological role, catalyzes the transfer of a dimethylallyl group onto the adenine at position 37 in tRNAs that read codons beginning with uridine, leading to the formation of N6-(dimethylallyl)adenosine (i(6)A). The chain is tRNA dimethylallyltransferase 2 from Mycobacterium marinum (strain ATCC BAA-535 / M).